We begin with the raw amino-acid sequence, 374 residues long: Histidinol-phosphate aminotransferase 1 (374 aa).

Position 232 is an N6-(pyridoxal phosphate)lysine (Lys-232).

The protein belongs to the class-II pyridoxal-phosphate-dependent aminotransferase family. Histidinol-phosphate aminotransferase subfamily. In terms of assembly, homodimer. Requires pyridoxal 5'-phosphate as cofactor.

It catalyses the reaction L-histidinol phosphate + 2-oxoglutarate = 3-(imidazol-4-yl)-2-oxopropyl phosphate + L-glutamate. It functions in the pathway amino-acid biosynthesis; L-histidine biosynthesis; L-histidine from 5-phospho-alpha-D-ribose 1-diphosphate: step 7/9. The protein is Histidinol-phosphate aminotransferase 1 (hisC1) of Ralstonia nicotianae (strain ATCC BAA-1114 / GMI1000) (Ralstonia solanacearum).